A 481-amino-acid chain; its full sequence is tRNA-guanine(15) transglycosylase (481 aa).

Asp87 functions as the Nucleophile in the catalytic mechanism. Residues Asp122 and Ala191 each contribute to the substrate site. Zn(2+) contacts are provided by Cys273, Cys275, and Cys278.

This sequence belongs to the archaeosine tRNA-ribosyltransferase family. Requires Zn(2+) as cofactor.

The enzyme catalyses guanosine(15) in tRNA + 7-cyano-7-deazaguanine = 7-cyano-7-carbaguanosine(15) in tRNA + guanine. The protein operates within tRNA modification; archaeosine-tRNA biosynthesis. Exchanges the guanine residue with 7-cyano-7-deazaguanine (preQ0) at position 15 in the dihydrouridine loop (D-loop) of archaeal tRNAs. The chain is tRNA-guanine(15) transglycosylase from Archaeoglobus fulgidus (strain ATCC 49558 / DSM 4304 / JCM 9628 / NBRC 100126 / VC-16).